A 146-amino-acid polypeptide reads, in one-letter code: Large ribosomal subunit protein uL15 (146 aa).

Residues 1–54 (MTIKLHDLRPAPGSKTPRTRVGRGEGSKGKTAGRGTKGTKARKQVPTTFEGGQM) form a disordered region.

This sequence belongs to the universal ribosomal protein uL15 family. Part of the 50S ribosomal subunit.

Its function is as follows. Binds to the 23S rRNA. This Mycobacterium ulcerans (strain Agy99) protein is Large ribosomal subunit protein uL15.